The sequence spans 371 residues: uncharacterized protein (371 aa).

This is an uncharacterized protein from Clostridium acetobutylicum (strain ATCC 824 / DSM 792 / JCM 1419 / IAM 19013 / LMG 5710 / NBRC 13948 / NRRL B-527 / VKM B-1787 / 2291 / W).